Consider the following 280-residue polypeptide: Protein FLOURY 1-like (280 aa).

The helical transmembrane segment at 22–42 threads the bilayer; the sequence is GFGFGIFVIGCSSQFFNLVFL. The disordered stretch occupies residues 153–187; sequence VALSETELDEKNHHGEEEESEDEEESQSQNDEDQL. Over residues 169 to 187 the composition is skewed to acidic residues; sequence EEESEDEEESQSQNDEDQL. The GTD-binding domain maps to 188 to 280; that stretch reads LDVITLRTMV…LDDDEDKIQM (93 aa).

It is found in the membrane. This chain is Protein FLOURY 1-like, found in Arabidopsis thaliana (Mouse-ear cress).